The primary structure comprises 1252 residues: Nephrin (1252 aa).

The signal sequence occupies residues 1 to 35 (MGAKRVTVRGARTSPIHRMSSLTPLLLMGMLTSGL). Topologically, residues 36–1078 (AESPVPTSAP…PGPPRLPLLP (1043 aa)) are extracellular. Ig-like C2-type domains lie at 39 to 144 (PVPT…VILS), 149 to 247 (PKVL…ASFT), 256 to 347 (PPVI…RSIT), 354 to 448 (PSAI…KSLT), 454 to 554 (PAQK…TQLV), and 558 to 649 (PPTN…ETVS). Asn54 carries an N-linked (GlcNAc...) asparagine glycan. Cystine bridges form between Cys67-Cys125, Cys174-Cys231, and Cys279-Cys331. The N-linked (GlcNAc...) asparagine glycan is linked to Asn370. Cysteines 375 and 431 form a disulfide. Ser446 is modified (phosphoserine). An intrachain disulfide couples Cys479 to Cys542. N-linked (GlcNAc...) asparagine glycans are attached at residues Asn561, Asn578, Asn591, and Asn722. An intrachain disulfide couples Cys581 to Cys637. 2 consecutive Ig-like C2-type domains span residues 754–846 (PTIR…LVRL) and 852–953 (PQVD…VSIS). 2 disulfides stabilise this stretch: Cys775-Cys830 and Cys877-Cys934. Residues 957–1052 (PPLGLKVVSI…IQVSVTTPGP (96 aa)) enclose the Fibronectin type-III domain. Positions 1043–1067 (IQVSVTTPGPDQAPEDTDHQLPTEL) are disordered. A helical membrane pass occupies residues 1079 to 1099 (VLFAVGGLLLLSNASCVGGLL). The Cytoplasmic segment spans residues 1100–1252 (WRRRLRRLAE…LPFELRGHLV (153 aa)). At Ser1112 the chain carries Phosphoserine. Over residues 1113–1127 (EKTEAGSEDRIRNEY) the composition is skewed to basic and acidic residues. The disordered stretch occupies residues 1113-1144 (EKTEAGSEDRIRNEYEESQWTGDRDTRSSTVS). Thr1115 carries the post-translational modification Phosphothreonine. Position 1119 is a phosphoserine (Ser1119). At Tyr1204 the chain carries Phosphotyrosine; by FYN.

It belongs to the immunoglobulin superfamily. Interacts with NPHS2 and with CD2AP (via C-terminal domain). Self-associates (via the Ig-like domains). Also interacts (via the Ig-like domains) with KIRREL1/NEPH1 and KIRREL2; the interaction with KIRREL1 is dependent on KIRREL1 glycosylation. Interacts with KIRREL3. Interacts with MAGI1 (via PDZ 2 and 3 domains) forming a tripartite complex with IGSF5/JAM4. Interacts with DDN; the interaction is direct. Forms a complex with ACTN4, CASK, IQGAP1, MAGI2, SPTAN1 and SPTBN1. Interacts with phosphatidylinositol 3-kinase regulatory subunit PIK3R1; the interaction is reduced by high glucose levels. Post-translationally, phosphorylated at Tyr-1204 by FYN, leading to the recruitment and activation of phospholipase C-gamma-1/PLCG1. Tyrosine phosphorylation is reduced by high glucose levels. Dephosphorylated by tensin TNS2 which leads to reduced binding of NPHN1 to PIK3R1. As to expression, strongly expressed in the podocytes of kidney glomeruli (at protein level) and at lower levels in the spleen.

The protein localises to the cell membrane. In terms of biological role, seems to play a role in the development or function of the kidney glomerular filtration barrier. Regulates glomerular vascular permeability. May anchor the podocyte slit diaphragm to the actin cytoskeleton. Plays a role in skeletal muscle formation through regulation of myoblast fusion. The chain is Nephrin (Nphs1) from Rattus norvegicus (Rat).